A 171-amino-acid chain; its full sequence is Dual specificity protein phosphatase OPG106 (171 aa).

One can recognise a Tyrosine-protein phosphatase domain in the interval 23 to 171 (SPTIMTRVTN…IIEKYVIDKN (149 aa)). Catalysis depends on Cys110, which acts as the Phosphocysteine intermediate.

The protein belongs to the protein-tyrosine phosphatase family. Non-receptor class dual specificity subfamily. Homodimer.

The protein resides in the virion. It localises to the host cytoplasm. The enzyme catalyses O-phospho-L-tyrosyl-[protein] + H2O = L-tyrosyl-[protein] + phosphate. It carries out the reaction O-phospho-L-seryl-[protein] + H2O = L-seryl-[protein] + phosphate. With respect to regulation, inhibited by NSC-62914, NSC-28086, NSC-105687, NSC-23173, 540211 and 217691 with IC50 values of 48, 51, 212, 342, 4 and 11 uM, respectively. Its function is as follows. Serine/tyrosine phosphatase which down-regulates cellular antiviral response by dephosphorylating activated host STAT1 and blocking interferon (IFN)-stimulated innate immune responses. Dephosphorylates the OPG144 protein. This chain is Dual specificity protein phosphatase OPG106 (OPG106), found in Homo sapiens (Human).